The primary structure comprises 298 residues: Tyrosine recombinase XerC (298 aa).

One can recognise a Core-binding (CB) domain in the interval 2 to 88 (TDLHTDVERY…ALRSFFDWLV (87 aa)). One can recognise a Tyr recombinase domain in the interval 109-288 (HLPKNIDVDD…DFQHLASVYD (180 aa)). Catalysis depends on residues Arg148, Lys172, His240, Arg243, and His266. The active-site O-(3'-phospho-DNA)-tyrosine intermediate is the Tyr275.

Belongs to the 'phage' integrase family. XerC subfamily. As to quaternary structure, forms a cyclic heterotetrameric complex composed of two molecules of XerC and two molecules of XerD, in which XerC interacts with XerD via its C-terminal region, XerD interacts with XerC via its C-terminal region and so on.

It localises to the cytoplasm. FtsK may regulate the catalytic switch between XerC and XerD in the heterotetrameric complex during the two steps of the recombination process. Its function is as follows. Site-specific tyrosine recombinase, which acts by catalyzing the cutting and rejoining of the recombining DNA molecules. Binds cooperatively to specific DNA consensus sequences that are separated from XerD binding sites by a short central region, forming the heterotetrameric XerC-XerD complex that recombines DNA substrates. The complex is essential to convert dimers of the bacterial chromosome into monomers to permit their segregation at cell division. It also contributes to the segregational stability of plasmids. In the complex XerC specifically exchanges the top DNA strands. The chain is Tyrosine recombinase XerC from Escherichia coli O157:H7.